Here is a 785-residue protein sequence, read N- to C-terminus: Semaphorin-3F (785 aa).

An N-terminal signal peptide occupies residues 1-18 (MLVTAFILWASLLTGAWP). In terms of domain architecture, Sema spans 31–545 (RVRLSFKELK…SAVGVTHLSL (515 aa)). Asn-53 carries an N-linked (GlcNAc...) asparagine glycan. Cys-104 and Cys-115 are oxidised to a cystine. Asn-126 carries N-linked (GlcNAc...) asparagine glycosylation. Cystine bridges form between Cys-133–Cys-142, Cys-300–Cys-412, Cys-324–Cys-372, and Cys-548–Cys-566. The interval 583-602 (RSRRQDVRHGNPIRQCRGFN) is disordered. The Ig-like C2-type domain occupies 605–695 (ANKNAVESVQ…KHIVTRVQLH (91 aa)). An intrachain disulfide couples Cys-678 to Cys-746. A disordered region spans residues 753 to 785 (VPPRPREAPGALRPPELQDQKKPRNRRHHPPDT). The segment covering 775–785 (PRNRRHHPPDT) has biased composition (basic residues).

The protein belongs to the semaphorin family. As to expression, expressed ubiquitously in adulthood. During embryogenesis, expressed in subregions of the central nervous system and various other tissues like skin, kidney, lung and intestine.

It is found in the secreted. The polypeptide is Semaphorin-3F (Sema3f) (Mus musculus (Mouse)).